Consider the following 529-residue polypeptide: Bifunctional purine biosynthesis protein PurH (529 aa).

Residues 1–148 (MQQRRPIRRA…KNHKDVAIVV (148 aa)) form the MGS-like domain. At Lys-287 the chain carries N6-acetyllysine.

The protein belongs to the PurH family.

The enzyme catalyses (6R)-10-formyltetrahydrofolate + 5-amino-1-(5-phospho-beta-D-ribosyl)imidazole-4-carboxamide = 5-formamido-1-(5-phospho-D-ribosyl)imidazole-4-carboxamide + (6S)-5,6,7,8-tetrahydrofolate. The catalysed reaction is IMP + H2O = 5-formamido-1-(5-phospho-D-ribosyl)imidazole-4-carboxamide. Its pathway is purine metabolism; IMP biosynthesis via de novo pathway; 5-formamido-1-(5-phospho-D-ribosyl)imidazole-4-carboxamide from 5-amino-1-(5-phospho-D-ribosyl)imidazole-4-carboxamide (10-formyl THF route): step 1/1. It participates in purine metabolism; IMP biosynthesis via de novo pathway; IMP from 5-formamido-1-(5-phospho-D-ribosyl)imidazole-4-carboxamide: step 1/1. This chain is Bifunctional purine biosynthesis protein PurH, found in Escherichia coli O139:H28 (strain E24377A / ETEC).